The sequence spans 464 residues: Argininosuccinate lyase (464 aa).

It belongs to the lyase 1 family. Argininosuccinate lyase subfamily.

It is found in the cytoplasm. It carries out the reaction 2-(N(omega)-L-arginino)succinate = fumarate + L-arginine. It participates in amino-acid biosynthesis; L-arginine biosynthesis; L-arginine from L-ornithine and carbamoyl phosphate: step 3/3. The chain is Argininosuccinate lyase from Streptococcus suis (strain 98HAH33).